A 153-amino-acid polypeptide reads, in one-letter code: Ribonuclease H (153 aa).

The RNase H type-1 domain maps to 4 to 145 (SVDSVELFTD…ADQLANRGVD (142 aa)). Residues aspartate 13, glutamate 51, aspartate 73, and aspartate 137 each contribute to the Mg(2+) site.

This sequence belongs to the RNase H family. As to quaternary structure, monomer. It depends on Mg(2+) as a cofactor.

The protein resides in the cytoplasm. The enzyme catalyses Endonucleolytic cleavage to 5'-phosphomonoester.. Endonuclease that specifically degrades the RNA of RNA-DNA hybrids. The chain is Ribonuclease H from Pseudomonas fluorescens (strain Pf0-1).